Here is a 344-residue protein sequence, read N- to C-terminus: MTAREGRAPRVRRVAVYGAVGLAAIAGVAIWSGAASHRGADTARLSADAAARDGASAAPPPPARPASAGMPSPLAGSSAPRLPLDAAGHLAKSRAVRDFFDYCLSARSDLSATALDALVVREIAAQLDGTMAQPEALDVWHRYRAYLDALAKLPDAGAVDKSDLGALQLALDQRVSIAYRTLGDWSQPFFGAEQWRQRYDLARLKIAQDRTLTEAQKAERLAALAQQMPGDERAARQKADRQQAAIDQIAQLQKSGATPDAMRAQLTQTLGPDAAARVAQMQQDDASWQSRYADYAAQRAQIEAAGLSPQDRDAQIAALRQRMFTKPGEAVRAASLDRGAAAAR.

The chain crosses the membrane as a helical span at residues 14–34; that stretch reads VAVYGAVGLAAIAGVAIWSGA. The segment covering 45–57 has biased composition (low complexity); that stretch reads LSADAAARDGASA. The interval 45–78 is disordered; it reads LSADAAARDGASAAPPPPARPASAGMPSPLAGSS.

Belongs to the lipase chaperone family.

It localises to the cell inner membrane. Its function is as follows. May be involved in the folding of the extracellular lipase during its passage through the periplasm. In Burkholderia ambifaria (strain ATCC BAA-244 / DSM 16087 / CCUG 44356 / LMG 19182 / AMMD) (Burkholderia cepacia (strain AMMD)), this protein is Lipase chaperone.